The primary structure comprises 776 residues: Cullin-1 (776 aa).

R63 bears the Omega-N-methylarginine mark. In terms of domain architecture, Cullin neddylation spans 706–766 (DRKLLIQAAI…IEKEYLERVD (61 aa)). K720 participates in a covalent cross-link: Glycyl lysine isopeptide (Lys-Gly) (interchain with G-Cter in NEDD8).

The protein belongs to the cullin family. As to quaternary structure, component of multiple Cul1-RING E3 ubiquitin-protein ligase complexes commonly known as SCF (SKP1-CUL1-F-box) complexes, consisting of CUL1, SKP1, RBX1 and a variable F-box domain-containing protein as substrate-specific subunit. Component of the SCF(FBXW11) complex containing FBXW11. Component of the SCF(SKP2) complex containing SKP2, in which it interacts directly with SKP1, SKP2 and RBX1. Component of the SCF(FBXW2) complex containing FBXW2. Component of the SCF(FBXO32) complex containing FBXO32. Component of the probable SCF(FBXO7) complex containing FBXO7. Component of the SCF(FBXO10) complex containing FBXO10. Component of the SCF(FBXO11) complex containing FBXO11. Component of the SCF(FBXO25) complex containing FBXO25. Component of the SCF(FBXO33) complex containing FBXO33. Component of the probable SCF(FBXO4) complex containing FBXO4. Component of the SCF(FBXO44) complex, composed of SKP1, CUL1 and FBXO44. Component of the SCF(BTRC) complex, composed of SKP1, CUL1 and BTRC. This complex binds phosphorylated NFKBIA. Part of a SCF complex consisting of CUL1, RBX1, SKP1 and FBXO2. Component of a SCF(SKP2)-like complex containing CUL1, SKP1, TRIM21 and SKP2. Component of the SCF(FBXO17) complex, composed of SKP1, CUL1 and FBXO17. Component of the SCF(FBXO27) complex, composed of SKP1, CUL1 and FBXO27. Component of the SCF(CCNF) complex consisting of CUL1, RBX1, SKP1 and CCNF. Interacts with CCNF. Component of the SCF(FBXL3) complex composed of CUL1, SKP1, RBX1 and FBXL3. Component of the SCF(FBXL21) complex composed of CUL1, SKP1, RBX1 and FBXL21. Component of the SCF(FBXO9) composed of CUL1, SKP1, RBX1 and FBXO9. Component of the SCF(FBXW7) composed of CUL1, SKP1, RBX1 and FBXW7. Component of the SCF(FBXO31) complex composed of CUL1, SKP1, RBX1 and FBXO31. Interacts with CHEK2; mediates CHEK2 ubiquitination and regulates its function. Part of a complex with TIP120A/CAND1 and RBX1. The unneddylated form interacts with TIP120A/CAND1 and the interaction mediates the exchange of the F-box substrate-specific subunit. Can self-associate. Interacts with FBXW8. Interacts with RNF7. Interacts with TRIM21. Interacts with COPS2. Interacts with DCUN1D1 and UBE2M. Interacts with DCUN1D3. Interacts with DCUN1D4. Identified in a complex with RBX1 and GLMN. Interacts with CEP68 as part of the SCF(FBXW11) complex; the interaction is probably mediated by FBXW11 and the complex also contains CDK5RAP2 and PCNT. Interacts (when neddylated) with ARIH1; leading to activate the E3 ligase activity of ARIH1. Interacts with COPS9. Interacts with UBXN1. Interacts with KAT7, probably as part of an SCF complex; the interaction mediates KAT7 ubiquitination. Interacts with NOTCH2. Part of a complex that contains DCUN1D5, CUL1 and RBX1; this interaction is bridged by CUL1. Interacts (unneddylated form) with DCUN1D1, DCUN1D2, DCUN1D3, DCUN1D4 and DCUN1D5; these interactions promote the cullin neddylation. Interacts (via the C-terminal domain) with CUL7; the interaction seems to be mediated by FBXW8; it is likely specific to FBXW8, but not other F-box proteins. Interacts with UBR2, as part of SCF(BTRC) complex; the interaction mediates 'Lys-48'-linked ubiquitination of UBR2 and is regulated by DUSP22 in the T-cell receptor signaling pathway. In terms of assembly, (Microbial infection) Interacts with murine cytomegalovirus M48. Neddylated; which enhances the ubiquitination activity of SCF. Neddylation prevents binding of the inhibitor CAND1. Neddylation leads to structural rearrangment in the complex that allows interaction between the E2 ubiquitin-conjugating enzyme and the acceptor ubiquitin. Deneddylated via its interaction with the COP9 signalosome (CSN) complex. In terms of processing, (Microbial infection) Deneddylated by murine cytomegalovirus M48 leading to a S-phase-like environment that is required for efficient replication of the viral genome. As to expression, embryo fibroblasts and embryo preadipocytes.

It functions in the pathway protein modification; protein ubiquitination. Functionally, core component of multiple cullin-RING-based SCF (SKP1-CUL1-F-box protein) E3 ubiquitin-protein ligase complexes, which mediate the ubiquitination of proteins involved in cell cycle progression, signal transduction and transcription. SCF complexes and ARIH1 collaborate in tandem to mediate ubiquitination of target proteins. In the SCF complex, serves as a rigid scaffold that organizes the SKP1-F-box protein and RBX1 subunits. May contribute to catalysis through positioning of the substrate and the ubiquitin-conjugating enzyme. The E3 ubiquitin-protein ligase activity of the complex is dependent on the neddylation of the cullin subunit and exchange of the substrate recognition component is mediated by TIP120A/CAND1. The functional specificity of the SCF complex depends on the F-box protein as substrate recognition component. SCF(BTRC) and SCF(FBXW11) direct ubiquitination of CTNNB1 and participate in Wnt signaling. SCF(FBXW11) directs ubiquitination of phosphorylated NFKBIA. SCF(BTRC) directs ubiquitination of NFKBIB, NFKBIE, ATF4, SMAD3, SMAD4, CDC25A, FBXO5 and probably NFKB2. SCF(BTRC) and/or SCF(FBXW11) direct ubiquitination of CEP68. SCF(SKP2) directs ubiquitination of phosphorylated CDKN1B/p27kip and is involved in regulation of G1/S transition. SCF(SKP2) directs ubiquitination of ORC1, CDT1, RBL2, ELF4, CDKN1A, RAG2, FOXO1A, and probably MYC and TAL1. SCF(FBXW7) directs ubiquitination of cyclin E, NOTCH1 released notch intracellular domain (NICD), and probably PSEN1. SCF(FBXW2) directs ubiquitination of GCM1. SCF(FBXO32) directs ubiquitination of MYOD1. SCF(FBXO7) directs ubiquitination of BIRC2 and DLGAP5. SCF(FBXO33) directs ubiquitination of YBX1. SCF(FBXO1) directs ubiquitination of BCL6 and DTL but does not seem to direct ubiquitination of TP53. SCF(BTRC) mediates the ubiquitination of NFKBIA at 'Lys-21' and 'Lys-22'; the degradation frees the associated NFKB1-RELA dimer to translocate into the nucleus and to activate transcription. SCF(CCNF) directs ubiquitination of CCP110. SCF(FBXL3) and SCF(FBXL21) direct ubiquitination of CRY1 and CRY2. SCF(FBXO9) directs ubiquitination of TTI1 and TELO2. SCF(FBXO10) directs ubiquitination of BCL2. Neddylated CUL1-RBX1 ubiquitinates p53/TP53 recruited by Cul7-RING(FBXW8) complex. SCF(BTRC) directs 'Lys-48'-linked ubiquitination of UBR2 in the T-cell receptor signaling pathway. The SCF(FBXO31) protein ligase complex specifically mediates the ubiquitination of proteins amidated at their C-terminus in response to oxidative stress. The protein is Cullin-1 (Cul1) of Mus musculus (Mouse).